Consider the following 255-residue polypeptide: Imidazole glycerol phosphate synthase subunit HisF (255 aa).

Residues aspartate 11 and aspartate 130 contribute to the active site.

This sequence belongs to the HisA/HisF family. As to quaternary structure, heterodimer of HisH and HisF.

The protein localises to the cytoplasm. The catalysed reaction is 5-[(5-phospho-1-deoxy-D-ribulos-1-ylimino)methylamino]-1-(5-phospho-beta-D-ribosyl)imidazole-4-carboxamide + L-glutamine = D-erythro-1-(imidazol-4-yl)glycerol 3-phosphate + 5-amino-1-(5-phospho-beta-D-ribosyl)imidazole-4-carboxamide + L-glutamate + H(+). The protein operates within amino-acid biosynthesis; L-histidine biosynthesis; L-histidine from 5-phospho-alpha-D-ribose 1-diphosphate: step 5/9. Functionally, IGPS catalyzes the conversion of PRFAR and glutamine to IGP, AICAR and glutamate. The HisF subunit catalyzes the cyclization activity that produces IGP and AICAR from PRFAR using the ammonia provided by the HisH subunit. The sequence is that of Imidazole glycerol phosphate synthase subunit HisF from Syntrophotalea carbinolica (strain DSM 2380 / NBRC 103641 / GraBd1) (Pelobacter carbinolicus).